Reading from the N-terminus, the 420-residue chain is Serine palmitoyltransferase (420 aa).

Residues 134 to 135, His-234, Thr-262, and Ser-264 each bind pyridoxal 5'-phosphate; that span reads GY. Lys-265 carries the post-translational modification N6-(pyridoxal phosphate)lysine.

Belongs to the class-II pyridoxal-phosphate-dependent aminotransferase family. As to quaternary structure, homodimer. Pyridoxal 5'-phosphate serves as cofactor.

The protein localises to the cytoplasm. The catalysed reaction is L-serine + hexadecanoyl-CoA + H(+) = 3-oxosphinganine + CO2 + CoA. The protein operates within lipid metabolism; sphingolipid metabolism. Not inhibited by relatively high concentrations of palmitoyl-CoA. Inhibited by both D-cycloserine (DCS) and L-cycloserine (LCS), which inactivate SPT by transamination to form a free pyridoxamine 5'-phosphate (PMP) and beta-aminooxyacetaldehyde that remain bound at the active site. Inhibition is reversed by incubation with excess pyridoxal phosphate. Inhibited by the fungal natural product myriocin, which acts as a competitive inhibitor for both L-serine and palmitoyl-CoA substrates. Catalyzes the condensation of L-serine with palmitoyl-CoA (hexadecanoyl-CoA) to produce 3-oxosphinganine. Exhibits a broad substrate specificity concerning the chain length and the degree of unsaturation of acyl-CoA. The polypeptide is Serine palmitoyltransferase (Sphingomonas paucimobilis (Pseudomonas paucimobilis)).